Here is a 114-residue protein sequence, read N- to C-terminus: MNKLIDEITKSQLNPDVPSFRPGDTVRVHAKVVEGTRERIQLFEGVVIKRRGAGISETFTVRKISNGVGVERTFPVHTPRIAKLEVIRRGKVRRAKLYYLRNLRGKAARIKEIR.

It belongs to the bacterial ribosomal protein bL19 family.

Its function is as follows. This protein is located at the 30S-50S ribosomal subunit interface and may play a role in the structure and function of the aminoacyl-tRNA binding site. The sequence is that of Large ribosomal subunit protein bL19 (rplS) from Listeria innocua serovar 6a (strain ATCC BAA-680 / CLIP 11262).